We begin with the raw amino-acid sequence, 837 residues long: Vacuolar membrane protease (837 aa).

The Cytoplasmic portion of the chain corresponds to 1–36 (MSEEEVHDTSSEASEVFTNQPNAFVRGVRSIFGYRK). Residues 37–57 (TSLTLFVILTIVVTAGLSFYD) traverse the membrane as a helical segment. Residues 58-355 (NSLELTIELP…FATPISALAR (298 aa)) are Vacuolar-facing. An N-linked (GlcNAc...) asparagine glycan is attached at Asn143. Zn(2+) contacts are provided by His157 and Asp169. Glu201 functions as the Proton acceptor in the catalytic mechanism. Residues Glu202, Glu227, and His299 each contribute to the Zn(2+) site. The helical transmembrane segment at 356-376 (VNLVLLVLFPVVSTPLLFVIV) threads the bilayer. Residues 377–384 (KYKKWKLR) are Cytoplasmic-facing. The helical transmembrane segment at 385–405 (VTNFLGVPLAMGLAVAVGQVG) threads the bilayer. Residues 406–415 (NPMLVSSHPM) are Vacuolar-facing. Residues 416-436 (MVVATTTSIVVLVYYVVLNGV) form a helical membrane-spanning segment. Over 437-446 (DWVNTSSDQK) the chain is Cytoplasmic. Residues 447–467 (LVTMIEVSFVYWVVLVYVTWS) form a helical membrane-spanning segment. Residues 468–474 (GGDHTGE) lie on the Vacuolar side of the membrane. A helical membrane pass occupies residues 475-495 (FGVTVLFFVQASTSLLGLIGW). Topologically, residues 496–539 (TFTRVRGGDEPLLSGEEERYGTEDERDTEKPLVEHNYDWSLQYL) are cytoplasmic. A helical transmembrane segment spans residues 540–560 (LIVPVSSLVVYNSGWLVLEGV). An N-linked (GlcNAc...) asparagine glycan is attached at Asn561. The Vacuolar segment spans residues 561–572 (NKTVQESLASEH). A helical transmembrane segment spans residues 573–593 (LIYWIVVVFSQFLVLPVVPFI). Residues 594–598 (TKFNR) lie on the Cytoplasmic side of the membrane. A helical membrane pass occupies residues 599-619 (YIVLGLSVVVVVGVLMSMAVH). The Vacuolar portion of the chain corresponds to 620 to 837 (PFNQGSPMKL…LVGVVKHVDV (218 aa)). Asn689 is a glycosylation site (N-linked (GlcNAc...) asparagine).

This sequence belongs to the peptidase M28 family. The cofactor is Zn(2+).

Its subcellular location is the vacuole membrane. Its function is as follows. May be involved in vacuolar sorting and osmoregulation. In Candida albicans (strain SC5314 / ATCC MYA-2876) (Yeast), this protein is Vacuolar membrane protease.